The following is a 148-amino-acid chain: SsrA-binding protein (148 aa).

It belongs to the SmpB family.

The protein localises to the cytoplasm. Functionally, required for rescue of stalled ribosomes mediated by trans-translation. Binds to transfer-messenger RNA (tmRNA), required for stable association of tmRNA with ribosomes. tmRNA and SmpB together mimic tRNA shape, replacing the anticodon stem-loop with SmpB. tmRNA is encoded by the ssrA gene; the 2 termini fold to resemble tRNA(Ala) and it encodes a 'tag peptide', a short internal open reading frame. During trans-translation Ala-aminoacylated tmRNA acts like a tRNA, entering the A-site of stalled ribosomes, displacing the stalled mRNA. The ribosome then switches to translate the ORF on the tmRNA; the nascent peptide is terminated with the 'tag peptide' encoded by the tmRNA and targeted for degradation. The ribosome is freed to recommence translation, which seems to be the essential function of trans-translation. The chain is SsrA-binding protein from Mycoplasma mycoides subsp. mycoides SC (strain CCUG 32753 / NCTC 10114 / PG1).